The primary structure comprises 101 residues: Urease subunit beta (101 aa).

It belongs to the urease beta subunit family. Heterotrimer of UreA (gamma), UreB (beta) and UreC (alpha) subunits. Three heterotrimers associate to form the active enzyme.

The protein localises to the cytoplasm. It carries out the reaction urea + 2 H2O + H(+) = hydrogencarbonate + 2 NH4(+). It participates in nitrogen metabolism; urea degradation; CO(2) and NH(3) from urea (urease route): step 1/1. This is Urease subunit beta from Mesorhizobium japonicum (strain LMG 29417 / CECT 9101 / MAFF 303099) (Mesorhizobium loti (strain MAFF 303099)).